The chain runs to 109 residues: Cell division protein ZapA (109 aa).

Residues 71–99 (KTRDYASNMEQRIRMLQQTIEQALLEQGR) adopt a coiled-coil conformation.

The protein belongs to the ZapA family. Type 1 subfamily. In terms of assembly, homodimer. Interacts with FtsZ.

It is found in the cytoplasm. In terms of biological role, activator of cell division through the inhibition of FtsZ GTPase activity, therefore promoting FtsZ assembly into bundles of protofilaments necessary for the formation of the division Z ring. It is recruited early at mid-cell but it is not essential for cell division. This chain is Cell division protein ZapA, found in Serratia proteamaculans (strain 568).